The chain runs to 453 residues: Carbamoyl phosphate synthase arginine-specific small chain (453 aa).

A mitochondrion-targeting transit peptide spans 1–28; the sequence is MFARVFKAMPARASALTSVNASIQARFM. One can recognise a Glutamine amidotransferase type-1 domain in the interval 219-406; the sequence is HVAVIDCGVK…IDSVKKYKAS (188 aa). Cysteine 295 functions as the Nucleophile in the catalytic mechanism. Residues histidine 379 and glutamate 381 contribute to the active site.

This sequence belongs to the CarA family. In terms of assembly, heterodimer composed of 2 chains; the small (or glutamine) chain promotes the hydrolysis of glutamine to ammonia, which is used by the large (or ammonia) chain to synthesize carbamoyl phosphate.

The protein localises to the mitochondrion matrix. It catalyses the reaction hydrogencarbonate + L-glutamine + 2 ATP + H2O = carbamoyl phosphate + L-glutamate + 2 ADP + phosphate + 2 H(+). The enzyme catalyses L-glutamine + H2O = L-glutamate + NH4(+). It participates in amino-acid biosynthesis; L-arginine biosynthesis; carbamoyl phosphate from bicarbonate: step 1/1. Small subunit of the arginine-specific carbamoyl phosphate synthase (CPSase). CPSase catalyzes the formation of carbamoyl phosphate from the ammonia moiety of glutamine, carbonate, and phosphate donated by ATP, the first step of the arginine biosynthetic pathway. The small subunit (glutamine amidotransferase) binds and cleaves glutamine to supply the large subunit with the substrate ammonia. This Neosartorya fischeri (strain ATCC 1020 / DSM 3700 / CBS 544.65 / FGSC A1164 / JCM 1740 / NRRL 181 / WB 181) (Aspergillus fischerianus) protein is Carbamoyl phosphate synthase arginine-specific small chain (cpa1).